A 455-amino-acid chain; its full sequence is Bifunctional protein GlmU (455 aa).

Residues 1–226 (MIAVAILAAG…YQEILGINDR (226 aa)) are pyrophosphorylase. Residues 7–10 (LAAG), K21, Q73, and 78–79 (GT) contribute to the UDP-N-acetyl-alpha-D-glucosamine site. D103 contacts Mg(2+). Residues G140, E155, N170, and N224 each contribute to the UDP-N-acetyl-alpha-D-glucosamine site. N224 serves as a coordination point for Mg(2+). Residues 227–247 (KQLATAYKILQDRIKDDWLVA) are linker. The segment at 248–455 (GVTIMDPDSI…RPISSKQTEK (208 aa)) is N-acetyltransferase. UDP-N-acetyl-alpha-D-glucosamine contacts are provided by R329 and K347. The Proton acceptor role is filled by H359. 2 residues coordinate UDP-N-acetyl-alpha-D-glucosamine: Y362 and N373. Acetyl-CoA-binding positions include A376, 382 to 383 (NY), A419, and R436.

The protein in the N-terminal section; belongs to the N-acetylglucosamine-1-phosphate uridyltransferase family. In the C-terminal section; belongs to the transferase hexapeptide repeat family. In terms of assembly, homotrimer. The cofactor is Mg(2+).

It localises to the cytoplasm. The enzyme catalyses alpha-D-glucosamine 1-phosphate + acetyl-CoA = N-acetyl-alpha-D-glucosamine 1-phosphate + CoA + H(+). The catalysed reaction is N-acetyl-alpha-D-glucosamine 1-phosphate + UTP + H(+) = UDP-N-acetyl-alpha-D-glucosamine + diphosphate. It participates in nucleotide-sugar biosynthesis; UDP-N-acetyl-alpha-D-glucosamine biosynthesis; N-acetyl-alpha-D-glucosamine 1-phosphate from alpha-D-glucosamine 6-phosphate (route II): step 2/2. The protein operates within nucleotide-sugar biosynthesis; UDP-N-acetyl-alpha-D-glucosamine biosynthesis; UDP-N-acetyl-alpha-D-glucosamine from N-acetyl-alpha-D-glucosamine 1-phosphate: step 1/1. Its pathway is bacterial outer membrane biogenesis; LPS lipid A biosynthesis. In terms of biological role, catalyzes the last two sequential reactions in the de novo biosynthetic pathway for UDP-N-acetylglucosamine (UDP-GlcNAc). The C-terminal domain catalyzes the transfer of acetyl group from acetyl coenzyme A to glucosamine-1-phosphate (GlcN-1-P) to produce N-acetylglucosamine-1-phosphate (GlcNAc-1-P), which is converted into UDP-GlcNAc by the transfer of uridine 5-monophosphate (from uridine 5-triphosphate), a reaction catalyzed by the N-terminal domain. In Acaryochloris marina (strain MBIC 11017), this protein is Bifunctional protein GlmU.